A 674-amino-acid chain; its full sequence is Methionine--tRNA ligase (674 aa).

Positions 11-21 (PYANGDLHLGH) match the 'HIGH' region motif. Residues Cys-142, Cys-145, Cys-155, and Cys-158 each contribute to the Zn(2+) site. Residues 330–334 (KMSKS) carry the 'KMSKS' region motif. Lys-333 lines the ATP pocket. Residues 574 to 674 (DFMKVDLRIA…EGAQPGMRVK (101 aa)) enclose the tRNA-binding domain.

This sequence belongs to the class-I aminoacyl-tRNA synthetase family. MetG type 1 subfamily. Homodimer. Zn(2+) is required as a cofactor.

The protein localises to the cytoplasm. The catalysed reaction is tRNA(Met) + L-methionine + ATP = L-methionyl-tRNA(Met) + AMP + diphosphate. Its function is as follows. Is required not only for elongation of protein synthesis but also for the initiation of all mRNA translation through initiator tRNA(fMet) aminoacylation. This Francisella tularensis subsp. tularensis (strain WY96-3418) protein is Methionine--tRNA ligase.